The primary structure comprises 220 residues: Octanoyltransferase (220 aa).

One can recognise a BPL/LPL catalytic domain in the interval 31–211; that stretch reads GTAADHLLLL…HFARIFDFEM (181 aa). Residues 76-83, 143-145, and 156-158 contribute to the substrate site; these read RGGDVTYH, AIG, and GFA. Residue C174 is the Acyl-thioester intermediate of the active site.

This sequence belongs to the LipB family.

It is found in the cytoplasm. The catalysed reaction is octanoyl-[ACP] + L-lysyl-[protein] = N(6)-octanoyl-L-lysyl-[protein] + holo-[ACP] + H(+). It participates in protein modification; protein lipoylation via endogenous pathway; protein N(6)-(lipoyl)lysine from octanoyl-[acyl-carrier-protein]: step 1/2. Catalyzes the transfer of endogenously produced octanoic acid from octanoyl-acyl-carrier-protein onto the lipoyl domains of lipoate-dependent enzymes. Lipoyl-ACP can also act as a substrate although octanoyl-ACP is likely to be the physiological substrate. The polypeptide is Octanoyltransferase (Solibacter usitatus (strain Ellin6076)).